The chain runs to 636 residues: Chaperone protein HtpG (636 aa).

The interval 1–342 (MSSETLEFQA…AHDLSLNISR (342 aa)) is a; substrate-binding. The b stretch occupies residues 343 to 558 (ELLQQDRQIQ…AHDVTPTLEK (216 aa)). The c stretch occupies residues 559–636 (MYRAMGHEVP…ILAERLARTL (78 aa)).

This sequence belongs to the heat shock protein 90 family. Homodimer.

Its subcellular location is the cytoplasm. Functionally, molecular chaperone. Has ATPase activity. This Salinispora tropica (strain ATCC BAA-916 / DSM 44818 / JCM 13857 / NBRC 105044 / CNB-440) protein is Chaperone protein HtpG.